Here is a 310-residue protein sequence, read N- to C-terminus: Fe-S cluster assembly protein dre2 (310 aa).

2 disordered regions span residues 1–30 (MAPS…GKRT) and 165–184 (APAP…DDND). Positions 24 to 154 (ADSGKRTLLL…KMDVGNGAAV (131 aa)) are N-terminal SAM-like domain. The interval 155–202 (PLRLGRKKKAAPAPAPVVQPPPIISSDDNDLNDDELIDEDTLLSADDL) is linker. Pro residues predominate over residues 167–177 (APAPVVQPPPI). [2Fe-2S] cluster is bound by residues Cys-212, Cys-223, Cys-226, and Cys-228. A fe-S binding site A region spans residues 212–228 (CQPKAGKRRRACKDCTC). [4Fe-4S] cluster is bound by residues Cys-273, Cys-276, Cys-284, and Cys-287. 2 consecutive short sequence motifs (cx2C motif) follow at residues 273–276 (CGNC) and 284–287 (CDGC). The segment at 273-287 (CGNCALGDAFRCDGC) is fe-S binding site B.

This sequence belongs to the anamorsin family. Monomer. Interacts with tah18. Interacts with mia40. Requires [2Fe-2S] cluster as cofactor. [4Fe-4S] cluster serves as cofactor.

The protein resides in the cytoplasm. It is found in the mitochondrion intermembrane space. In terms of biological role, component of the cytosolic iron-sulfur (Fe-S) protein assembly (CIA) machinery required for the maturation of extramitochondrial Fe-S proteins. Part of an electron transfer chain functioning in an early step of cytosolic Fe-S biogenesis, facilitating the de novo assembly of a [4Fe-4S] cluster on the scaffold complex cfd1-nbp35. Electrons are transferred to dre2 from NADPH via the FAD- and FMN-containing protein tah18. Tah18-dre2 are also required for the assembly of the diferric tyrosyl radical cofactor of ribonucleotide reductase (RNR), probably by providing electrons for reduction during radical cofactor maturation in the catalytic small subunit rnr2. This is Fe-S cluster assembly protein dre2 from Emericella nidulans (strain FGSC A4 / ATCC 38163 / CBS 112.46 / NRRL 194 / M139) (Aspergillus nidulans).